The sequence spans 206 residues: Small ribosomal subunit protein uS4 (206 aa).

In terms of domain architecture, S4 RNA-binding spans Cys96 to Ala156.

The protein belongs to the universal ribosomal protein uS4 family. Part of the 30S ribosomal subunit. Contacts protein S5. The interaction surface between S4 and S5 is involved in control of translational fidelity.

Its function is as follows. One of the primary rRNA binding proteins, it binds directly to 16S rRNA where it nucleates assembly of the body of the 30S subunit. With S5 and S12 plays an important role in translational accuracy. The sequence is that of Small ribosomal subunit protein uS4 from Azotobacter vinelandii (strain DJ / ATCC BAA-1303).